Here is a 319-residue protein sequence, read N- to C-terminus: Ferrochelatase (319 aa).

His-192 and Glu-271 together coordinate Fe cation.

This sequence belongs to the ferrochelatase family.

The protein localises to the cytoplasm. The catalysed reaction is heme b + 2 H(+) = protoporphyrin IX + Fe(2+). It participates in porphyrin-containing compound metabolism; protoheme biosynthesis; protoheme from protoporphyrin-IX: step 1/1. In terms of biological role, catalyzes the ferrous insertion into protoporphyrin IX. The sequence is that of Ferrochelatase from Geotalea daltonii (strain DSM 22248 / JCM 15807 / FRC-32) (Geobacter daltonii).